A 138-amino-acid polypeptide reads, in one-letter code: Putative nickel-responsive regulator (138 aa).

Residues H80, H91, H93, and C99 each contribute to the Ni(2+) site.

Belongs to the transcriptional regulatory CopG/NikR family. The cofactor is Ni(2+).

Functionally, transcriptional regulator. The polypeptide is Putative nickel-responsive regulator (Campylobacter hominis (strain ATCC BAA-381 / DSM 21671 / CCUG 45161 / LMG 19568 / NCTC 13146 / CH001A)).